An 82-amino-acid chain; its full sequence is Putative antimicrobial peptide 7848 (82 aa).

Positions 1–17 are cleaved as a signal peptide; that stretch reads MNENLWAAPAPKKLSKH. Residues 16-60 are disordered; it reads KHFFGRGGPLGKETGPNLFPKKPGAGKGLGFPPTKKPRGQPRVLK. A propeptide spanning residues 38 to 82 is cleaved from the precursor; it reads PGAGKGLGFPPTKKPRGQPRVLKKPKWNSEGLIGILHRGSDGVQF. A compositionally biased stretch (basic residues) spans 50-60; that stretch reads KKPRGQPRVLK.

It belongs to the non-disulfide-bridged peptide (NDBP) superfamily. Short antimicrobial peptide (group 4) family. Expressed by the venom gland.

It is found in the secreted. The protein is Putative antimicrobial peptide 7848 of Urodacus yaschenkoi (Inland robust scorpion).